Consider the following 429-residue polypeptide: 3-phosphoshikimate 1-carboxyvinyltransferase (429 aa).

3-phosphoshikimate-binding residues include Lys-21, Ser-22, and Arg-26. Lys-21 is a phosphoenolpyruvate binding site. Phosphoenolpyruvate is bound by residues Gly-94 and Arg-122. 4 residues coordinate 3-phosphoshikimate: Ser-167, Gln-169, Asp-315, and Lys-342. Position 169 (Gln-169) interacts with phosphoenolpyruvate. Asp-315 acts as the Proton acceptor in catalysis. Residues Arg-346 and Arg-388 each contribute to the phosphoenolpyruvate site.

This sequence belongs to the EPSP synthase family. As to quaternary structure, monomer.

It is found in the cytoplasm. It catalyses the reaction 3-phosphoshikimate + phosphoenolpyruvate = 5-O-(1-carboxyvinyl)-3-phosphoshikimate + phosphate. It functions in the pathway metabolic intermediate biosynthesis; chorismate biosynthesis; chorismate from D-erythrose 4-phosphate and phosphoenolpyruvate: step 6/7. Functionally, catalyzes the transfer of the enolpyruvyl moiety of phosphoenolpyruvate (PEP) to the 5-hydroxyl of shikimate-3-phosphate (S3P) to produce enolpyruvyl shikimate-3-phosphate and inorganic phosphate. This Desulforamulus reducens (strain ATCC BAA-1160 / DSM 100696 / MI-1) (Desulfotomaculum reducens) protein is 3-phosphoshikimate 1-carboxyvinyltransferase.